The following is a 265-amino-acid chain: Secreted RxLR effector protein 16 (265 aa).

A signal peptide spans 1–19; sequence MRGAFYIAIALLIVRSRTA. Residues 46-61 carry the RxLR-dEER motif; sequence RYLRGGLALSATNEER. N-linked (GlcNAc...) asparagine glycans are attached at residues asparagine 170, asparagine 219, and asparagine 240.

The protein belongs to the RxLR effector family. N-glycosylated. The putative N-glycosylation site at position 240 is essential for cell death-inducing activity.

The protein resides in the secreted. It localises to the host nucleus. Its function is as follows. Effector that acts as an elicitor that induces cell death and promotes ROS accumulation in Nicotian benthamiana. RxLR16-triggered cell death is dependent on SGT1, HSP90 and RAR1, but independent of the somatic embryogenesis receptor-like kinase SERK3/BAK1, indicating that it acts independently of the detection of cell surface pattern recognition receptors. Enhances the expressional levels of defense-associated genes involved in the salicylic acid-, jasmonate acid-, and ethylene-mediated signal transduction, resulting in disease resistance. However, as some other Plasmopara viticola RxLR effectors including RxLR1, RxLR10, RxLR30 and RxLR25, can suppress defense responses and disease resistance induced by RxLR16, it may not trigger host cell death or immune responses during physiological infection under natural conditions. This Plasmopara viticola (Downy mildew of grapevine) protein is Secreted RxLR effector protein 16.